Consider the following 452-residue polypeptide: Fructose-2,6-bisphosphatase (452 aa).

Positions 1–223 (MGYSTISNDN…VFYVMNIRPK (223 aa)) are 6-phosphofructo-2-kinase. 20–28 (GLPARGKSF) contributes to the ATP binding site. Positions 53 and 78 each coordinate beta-D-fructose 6-phosphate. Asp-104 is a catalytic residue. 2 residues coordinate beta-D-fructose 6-phosphate: Thr-106 and Arg-112. 143–148 (NAKDIG) is a binding site for ATP. Beta-D-fructose 6-phosphate contacts are provided by Arg-169 and Tyr-173. The interval 224 to 452 (PKYIWLSRHG…LNDSPLEDKF (229 aa)) is fructose-2,6-bisphosphatase. Position 231 (Arg-231) interacts with beta-D-fructose 2,6-bisphosphate. His-232 acts as the Tele-phosphohistidine intermediate in catalysis. Beta-D-fructose 2,6-bisphosphate is bound by residues Asn-238 and Gly-244. Residue Glu-302 is the Proton donor/acceptor of the active site. 6 residues coordinate beta-D-fructose 2,6-bisphosphate: Tyr-313, Arg-327, Lys-331, Tyr-342, Gln-368, and Arg-372. An ATP-binding site is contributed by 324–327 (FKAR). Residues 368–372 (QAVLR) and Tyr-404 each bind ATP. Ser-435 and Ser-446 each carry phosphoserine.

In the C-terminal section; belongs to the phosphoglycerate mutase family.

The catalysed reaction is beta-D-fructose 2,6-bisphosphate + H2O = beta-D-fructose 6-phosphate + phosphate. With respect to regulation, inhibited by fructose 6-P, activated by glycerol 3-P. Functionally, monofunctional, high-specificity fructose-2,6-bisphosphatase, which releases phosphate from the 2-position of fructose 2,6-bisphosphate. Has no detectable 6-phosphofructo-2-kinase activity. The sequence is that of Fructose-2,6-bisphosphatase from Saccharomyces cerevisiae (strain ATCC 204508 / S288c) (Baker's yeast).